The following is a 193-amino-acid chain: dCTP deaminase, dUMP-forming (193 aa).

Residues 101–106 (KSSLGR), D119, 127–129 (TLE), Q148, Y162, and Q174 contribute to the dCTP site. E129 (proton donor/acceptor) is an active-site residue. The disordered stretch occupies residues 162 to 184 (YGSKGTGSHYQGQRGPTPSRSYE). Residues 167 to 183 (TGSHYQGQRGPTPSRSY) are compositionally biased toward polar residues.

This sequence belongs to the dCTP deaminase family. Homotrimer.

It carries out the reaction dCTP + 2 H2O = dUMP + NH4(+) + diphosphate. The protein operates within pyrimidine metabolism; dUMP biosynthesis; dUMP from dCTP: step 1/1. Its function is as follows. Bifunctional enzyme that catalyzes both the deamination of dCTP to dUTP and the hydrolysis of dUTP to dUMP without releasing the toxic dUTP intermediate. The sequence is that of dCTP deaminase, dUMP-forming from Bifidobacterium longum (strain DJO10A).